Here is a 103-residue protein sequence, read N- to C-terminus: MVESAFQPFSGDADEWFEEPRPQAGFFPSADWHLLKRDETYAAYAKDLDFMWRWVIVREERIVQEGCSISLESSIRAVTHVLNYFGMTEQRAPAEDRTGGVQH.

As to quaternary structure, the soluble methane monooxygenase (sMMO) consists of four components A/MMOH (composed of alpha/MmoX, beta/MmoY and gamma/MmoZ), B/MMOB (MmoB), C/MMOR (MmoC) and D/MMOD (MmoD).

The chain is Methane monooxygenase component D (mmoD) from Methylococcus capsulatus (strain ATCC 33009 / NCIMB 11132 / Bath).